Consider the following 567-residue polypeptide: 2-succinyl-5-enolpyruvyl-6-hydroxy-3-cyclohexene-1-carboxylate synthase (567 aa).

This sequence belongs to the TPP enzyme family. MenD subfamily. In terms of assembly, homodimer. It depends on Mg(2+) as a cofactor. The cofactor is Mn(2+). Thiamine diphosphate is required as a cofactor.

It carries out the reaction isochorismate + 2-oxoglutarate + H(+) = 5-enolpyruvoyl-6-hydroxy-2-succinyl-cyclohex-3-ene-1-carboxylate + CO2. The protein operates within quinol/quinone metabolism; 1,4-dihydroxy-2-naphthoate biosynthesis; 1,4-dihydroxy-2-naphthoate from chorismate: step 2/7. It functions in the pathway quinol/quinone metabolism; menaquinone biosynthesis. Functionally, catalyzes the thiamine diphosphate-dependent decarboxylation of 2-oxoglutarate and the subsequent addition of the resulting succinic semialdehyde-thiamine pyrophosphate anion to isochorismate to yield 2-succinyl-5-enolpyruvyl-6-hydroxy-3-cyclohexene-1-carboxylate (SEPHCHC). In Yersinia pseudotuberculosis serotype O:1b (strain IP 31758), this protein is 2-succinyl-5-enolpyruvyl-6-hydroxy-3-cyclohexene-1-carboxylate synthase.